The chain runs to 187 residues: Orotate phosphoribosyltransferase (187 aa).

5-phospho-alpha-D-ribose 1-diphosphate contacts are provided by residues Arg98, Lys99, Lys102, His104, and Glu128 to Ser136. Positions 132 and 160 each coordinate orotate.

It belongs to the purine/pyrimidine phosphoribosyltransferase family. PyrE subfamily. In terms of assembly, homodimer. Mg(2+) is required as a cofactor.

It catalyses the reaction orotidine 5'-phosphate + diphosphate = orotate + 5-phospho-alpha-D-ribose 1-diphosphate. Its pathway is pyrimidine metabolism; UMP biosynthesis via de novo pathway; UMP from orotate: step 1/2. Its function is as follows. Catalyzes the transfer of a ribosyl phosphate group from 5-phosphoribose 1-diphosphate to orotate, leading to the formation of orotidine monophosphate (OMP). In Rhodopseudomonas palustris (strain TIE-1), this protein is Orotate phosphoribosyltransferase.